The chain runs to 1118 residues: Error-prone DNA polymerase (1118 aa).

The tract at residues 1071–1118 (GPQPMGYAKEVGSDRRSRPEIGNAPARQDLATLSEEAEQVMPKGRNFQ) is disordered.

This sequence belongs to the DNA polymerase type-C family. DnaE2 subfamily.

It localises to the cytoplasm. It catalyses the reaction DNA(n) + a 2'-deoxyribonucleoside 5'-triphosphate = DNA(n+1) + diphosphate. DNA polymerase involved in damage-induced mutagenesis and translesion synthesis (TLS). It is not the major replicative DNA polymerase. This chain is Error-prone DNA polymerase, found in Mesorhizobium japonicum (strain LMG 29417 / CECT 9101 / MAFF 303099) (Mesorhizobium loti (strain MAFF 303099)).